An 85-amino-acid chain; its full sequence is MKLLLLLTISASMLIEGLVNADGYIRGGDGCKVSCVINHVFCDNECKAAGGSYGYCWGWGLACWCEGLPADREWDYETNTCGGKK.

An N-terminal signal peptide occupies residues 1-21; the sequence is MKLLLLLTISASMLIEGLVNA. The 61-residue stretch at 22–82 folds into the LCN-type CS-alpha/beta domain; that stretch reads DGYIRGGDGC…EWDYETNTCG (61 aa). 4 cysteine pairs are disulfide-bonded: Cys31–Cys81, Cys35–Cys56, Cys42–Cys63, and Cys46–Cys65. The residue at position 82 (Gly82) is a Glycine amide.

This sequence belongs to the long (4 C-C) scorpion toxin superfamily. Sodium channel inhibitor family. Beta subfamily. In terms of tissue distribution, expressed by the venom gland.

Its subcellular location is the secreted. In terms of biological role, depressant insect beta-toxins cause a transient contraction paralysis followed by a slow flaccid paralysis. They bind voltage-independently at site-4 of sodium channels (Nav) and block action potentials, primarily by depolarizing the axonal membrane and suppressing the sodium current. This depressant toxin is active only on insects. It is found in a relatively small amount in the venom, and its activity on insects is 10-fold higher compared to other known depressant toxins. The polypeptide is Beta-insect depressant toxin Lqh-dprIT3b (Leiurus hebraeus (Hebrew deathstalker scorpion)).